Consider the following 332-residue polypeptide: Glycerol-3-phosphate dehydrogenase [NAD(P)+] (332 aa).

NADPH contacts are provided by serine 11, phenylalanine 12, lysine 32, and lysine 106. Sn-glycerol 3-phosphate-binding residues include lysine 106, glycine 137, and serine 139. Alanine 141 provides a ligand contact to NADPH. Positions 192, 245, 255, 256, and 257 each coordinate sn-glycerol 3-phosphate. Catalysis depends on lysine 192, which acts as the Proton acceptor. Arginine 256 provides a ligand contact to NADPH. NADPH is bound by residues valine 280 and glutamate 282.

It belongs to the NAD-dependent glycerol-3-phosphate dehydrogenase family.

The protein resides in the cytoplasm. The enzyme catalyses sn-glycerol 3-phosphate + NAD(+) = dihydroxyacetone phosphate + NADH + H(+). The catalysed reaction is sn-glycerol 3-phosphate + NADP(+) = dihydroxyacetone phosphate + NADPH + H(+). It participates in membrane lipid metabolism; glycerophospholipid metabolism. Functionally, catalyzes the reduction of the glycolytic intermediate dihydroxyacetone phosphate (DHAP) to sn-glycerol 3-phosphate (G3P), the key precursor for phospholipid synthesis. This Staphylococcus haemolyticus (strain JCSC1435) protein is Glycerol-3-phosphate dehydrogenase [NAD(P)+].